The following is a 153-amino-acid chain: SsrA-binding protein (153 aa).

This sequence belongs to the SmpB family.

Its subcellular location is the cytoplasm. Required for rescue of stalled ribosomes mediated by trans-translation. Binds to transfer-messenger RNA (tmRNA), required for stable association of tmRNA with ribosomes. tmRNA and SmpB together mimic tRNA shape, replacing the anticodon stem-loop with SmpB. tmRNA is encoded by the ssrA gene; the 2 termini fold to resemble tRNA(Ala) and it encodes a 'tag peptide', a short internal open reading frame. During trans-translation Ala-aminoacylated tmRNA acts like a tRNA, entering the A-site of stalled ribosomes, displacing the stalled mRNA. The ribosome then switches to translate the ORF on the tmRNA; the nascent peptide is terminated with the 'tag peptide' encoded by the tmRNA and targeted for degradation. The ribosome is freed to recommence translation, which seems to be the essential function of trans-translation. The polypeptide is SsrA-binding protein (Pelotomaculum thermopropionicum (strain DSM 13744 / JCM 10971 / SI)).